A 236-amino-acid chain; its full sequence is uncharacterized protein (236 aa).

Residues 1–29 form a disordered region; it reads MNNEKNKQDRENLNRQDERKSSEIKSERK.

This is an uncharacterized protein from Staphylococcus aureus.